The following is a 346-amino-acid chain: Beta-hexosaminidase (346 aa).

Substrate-binding positions include aspartate 62, arginine 70, arginine 134, and 164–165 (KH). The Proton donor/acceptor role is filled by histidine 177. The active-site Nucleophile is the aspartate 249.

It belongs to the glycosyl hydrolase 3 family. NagZ subfamily.

The protein resides in the cytoplasm. The catalysed reaction is Hydrolysis of terminal non-reducing N-acetyl-D-hexosamine residues in N-acetyl-beta-D-hexosaminides.. It participates in cell wall biogenesis; peptidoglycan recycling. Functionally, plays a role in peptidoglycan recycling by cleaving the terminal beta-1,4-linked N-acetylglucosamine (GlcNAc) from peptide-linked peptidoglycan fragments, giving rise to free GlcNAc, anhydro-N-acetylmuramic acid and anhydro-N-acetylmuramic acid-linked peptides. The sequence is that of Beta-hexosaminidase from Actinobacillus succinogenes (strain ATCC 55618 / DSM 22257 / CCUG 43843 / 130Z).